A 283-amino-acid chain; its full sequence is Mitochondrial outer membrane protein porin (283 aa).

Belongs to the eukaryotic mitochondrial porin family.

It is found in the mitochondrion outer membrane. Its function is as follows. Forms a channel through the cell membrane that allows diffusion of small hydrophilic molecules. The channel adopts an open conformation at low or zero membrane potential and a closed conformation at potentials above 30-40 mV. The open state has a weak anion selectivity whereas the closed state is cation-selective. The sequence is that of Mitochondrial outer membrane protein porin from Neurospora crassa (strain ATCC 24698 / 74-OR23-1A / CBS 708.71 / DSM 1257 / FGSC 987).